Reading from the N-terminus, the 197-residue chain is Probable nicotinate-nucleotide adenylyltransferase (197 aa).

It belongs to the NadD family.

It catalyses the reaction nicotinate beta-D-ribonucleotide + ATP + H(+) = deamido-NAD(+) + diphosphate. The protein operates within cofactor biosynthesis; NAD(+) biosynthesis; deamido-NAD(+) from nicotinate D-ribonucleotide: step 1/1. Catalyzes the reversible adenylation of nicotinate mononucleotide (NaMN) to nicotinic acid adenine dinucleotide (NaAD). In Thermosipho melanesiensis (strain DSM 12029 / CIP 104789 / BI429), this protein is Probable nicotinate-nucleotide adenylyltransferase.